The primary structure comprises 236 residues: 2-C-methyl-D-erythritol 4-phosphate cytidylyltransferase (236 aa).

This sequence belongs to the IspD/TarI cytidylyltransferase family. IspD subfamily. As to quaternary structure, homodimer.

The catalysed reaction is 2-C-methyl-D-erythritol 4-phosphate + CTP + H(+) = 4-CDP-2-C-methyl-D-erythritol + diphosphate. It functions in the pathway isoprenoid biosynthesis; isopentenyl diphosphate biosynthesis via DXP pathway; isopentenyl diphosphate from 1-deoxy-D-xylulose 5-phosphate: step 2/6. Catalyzes the formation of 4-diphosphocytidyl-2-C-methyl-D-erythritol from CTP and 2-C-methyl-D-erythritol 4-phosphate (MEP). The sequence is that of 2-C-methyl-D-erythritol 4-phosphate cytidylyltransferase from Escherichia coli O7:K1 (strain IAI39 / ExPEC).